Reading from the N-terminus, the 76-residue chain is Omega-conotoxin-like TxO3 (76 aa).

Residues 1 to 22 form the signal peptide; sequence MKLTCVVIVAVLFLTAWTFVTA. The propeptide occupies 23-52; it reads VPHSSNALENLYLKAHHEMNNPEASELNKR. 3 cysteine pairs are disulfide-bonded: Cys53–Cys67, Cys60–Cys71, and Cys66–Cys75.

Belongs to the conotoxin O1 superfamily. In terms of tissue distribution, expressed by the venom duct.

Its subcellular location is the secreted. Functionally, omega-conotoxins act at presynaptic membranes, they bind and block voltage-gated calcium channels (Cav). The protein is Omega-conotoxin-like TxO3 (TXO3) of Conus textile (Cloth-of-gold cone).